A 92-amino-acid chain; its full sequence is Small ribosomal subunit protein uS19c (92 aa).

Belongs to the universal ribosomal protein uS19 family.

The protein resides in the plastid. The protein localises to the chloroplast. Protein S19 forms a complex with S13 that binds strongly to the 16S ribosomal RNA. The chain is Small ribosomal subunit protein uS19c from Cycas taitungensis (Prince sago).